The sequence spans 538 residues: Diacylglycerol O-acyltransferase 1-1 (538 aa).

Disordered regions lie at residues 1-39 (MVGS…GAIV) and 54-106 (AAAA…GGGR). The span at 69–83 (EAASGEPSSSSSSSP) shows a compositional bias: low complexity. 7 helical membrane passes run 136-156 (AIFK…LVAV), 186-206 (WPLL…FAVE), 218-238 (VATC…VLVI), 245-265 (VLSG…LVSF), 293-313 (NLQP…TLCY), 326-346 (GWLI…GFII), and 382-402 (LWLC…AEIL). Residues 409–415 (FYKDWWN) carry the FYXDWWN motif motif. 3 helical membrane passes run 451 to 471 (VAVL…VAVP), 474 to 494 (ILKF…VLTA), and 505 to 525 (VGNM…CLLL). His464 is an active-site residue.

Belongs to the membrane-bound acyltransferase family. Sterol o-acyltransferase subfamily.

Its subcellular location is the endoplasmic reticulum membrane. It carries out the reaction an acyl-CoA + a 1,2-diacyl-sn-glycerol = a triacyl-sn-glycerol + CoA. It functions in the pathway glycerolipid metabolism; triacylglycerol biosynthesis. In terms of biological role, involved in triacylglycerol (TAG) synthesis. Catalyzes the acylation of the sn-3 hydroxy group of sn-1,2-diacylglycerol using acyl-CoA. The polypeptide is Diacylglycerol O-acyltransferase 1-1 (Oryza sativa subsp. japonica (Rice)).